We begin with the raw amino-acid sequence, 168 residues long: Protein-export protein SecB (168 aa).

It belongs to the SecB family. As to quaternary structure, homotetramer, a dimer of dimers. One homotetramer interacts with 1 SecA dimer.

The protein localises to the cytoplasm. In terms of biological role, one of the proteins required for the normal export of preproteins out of the cell cytoplasm. It is a molecular chaperone that binds to a subset of precursor proteins, maintaining them in a translocation-competent state. It also specifically binds to its receptor SecA. The chain is Protein-export protein SecB from Saccharophagus degradans (strain 2-40 / ATCC 43961 / DSM 17024).